Reading from the N-terminus, the 965-residue chain is Inner tegument protein (965 aa).

Positions Trp489–Phe965 are interaction with large tegument protein.

The protein belongs to the herpesviridae inner tegument protein family. As to quaternary structure, interacts (via C-terminus) with the large tegument protein/LTP (via N-terminus).

It is found in the virion tegument. The protein resides in the host cytoplasm. Its subcellular location is the host nucleus. It localises to the host Golgi apparatus. The protein localises to the host trans-Golgi network. In terms of biological role, plays an essential role in cytoplasmic secondary envelopment during viral egress. Interacts with the capsid via the large tegument protein/LTP and participates in its transport to the host trans-Golgi network (TGN) where secondary envelopment occurs. Modulates tegumentation and capsid accumulation at the viral assembly complex. This chain is Inner tegument protein (63), found in Equine herpesvirus 2 (strain 86/87) (EHV-2).